Here is a 127-residue protein sequence, read N- to C-terminus: Large ribosomal subunit protein bL20 (127 aa).

Belongs to the bacterial ribosomal protein bL20 family.

Functionally, binds directly to 23S ribosomal RNA and is necessary for the in vitro assembly process of the 50S ribosomal subunit. It is not involved in the protein synthesizing functions of that subunit. The chain is Large ribosomal subunit protein bL20 from Bifidobacterium adolescentis (strain ATCC 15703 / DSM 20083 / NCTC 11814 / E194a).